The sequence spans 398 residues: T-box transcription factor TBX1 (398 aa).

Positions 23–72 are disordered; sequence AAGGFPGAASPGADPYGPREPPPPPPRYDPCAAAAPGAPGPPPPPHAYPF. Residues 29 to 38 show a composition bias toward low complexity; it reads GAASPGADPY. 2 stretches are compositionally biased toward pro residues: residues 40-50 and 60-69; these read PREPPPPPPRY and APGPPPPPHA. Positions 119 to 297 form a DNA-binding region, T-box; it reads LWDEFNQLGT…SNPFAKGFRD (179 aa).

In terms of assembly, binds DNA as a dimer. Interacts with DSCR6. Interacts with NKX2-5.

It localises to the nucleus. Its function is as follows. Transcription factor that plays a key role in cardiovascular development by promoting pharyngeal arch segmentation during embryonic development. Also involved in craniofacial muscle development. Together with NKX2-5, acts as a regulator of asymmetric cardiac morphogenesis by promoting expression of PITX2. Acts upstream of TBX1 for the formation of the thymus and parathyroid glands from the third pharyngeal pouch. Required for hair follicle stem cell self-renewal. Binds to the palindromic T site 5'-TTCACACCTAGGTGTGAA-3' DNA sequence. In Homo sapiens (Human), this protein is T-box transcription factor TBX1.